A 311-amino-acid chain; its full sequence is Formimidoylglutamase (311 aa).

Residues H127, D152, H154, D156, C236, and D238 each coordinate Mn(2+).

This sequence belongs to the arginase family. Mn(2+) serves as cofactor.

It carries out the reaction N-formimidoyl-L-glutamate + H2O = formamide + L-glutamate. Its pathway is amino-acid degradation; L-histidine degradation into L-glutamate; L-glutamate from N-formimidoyl-L-glutamate (hydrolase route): step 1/1. Its function is as follows. Catalyzes the conversion of N-formimidoyl-L-glutamate to L-glutamate and formamide. The chain is Formimidoylglutamase from Macrococcus caseolyticus (strain JCSC5402) (Macrococcoides caseolyticum).